Here is a 141-residue protein sequence, read N- to C-terminus: Large-conductance mechanosensitive channel (141 aa).

The next 3 helical transmembrane spans lie at 14 to 34, 38 to 58, and 81 to 101; these read VMDL…VKSL, IIMP…YFLG, and GSFI…FLMV.

It belongs to the MscL family. In terms of assembly, homopentamer.

The protein resides in the cell inner membrane. Channel that opens in response to stretch forces in the membrane lipid bilayer. May participate in the regulation of osmotic pressure changes within the cell. This chain is Large-conductance mechanosensitive channel, found in Rhizobium rhizogenes (strain K84 / ATCC BAA-868) (Agrobacterium radiobacter).